A 370-amino-acid polypeptide reads, in one-letter code: UDP-N-acetylglucosamine--N-acetylmuramyl-(pentapeptide) pyrophosphoryl-undecaprenol N-acetylglucosamine transferase (370 aa).

UDP-N-acetyl-alpha-D-glucosamine-binding positions include 10-12 (TGG), asparagine 124, arginine 166, serine 198, isoleucine 252, and glutamine 297.

It belongs to the glycosyltransferase 28 family. MurG subfamily.

The protein localises to the cell membrane. It carries out the reaction di-trans,octa-cis-undecaprenyl diphospho-N-acetyl-alpha-D-muramoyl-L-alanyl-D-glutamyl-meso-2,6-diaminopimeloyl-D-alanyl-D-alanine + UDP-N-acetyl-alpha-D-glucosamine = di-trans,octa-cis-undecaprenyl diphospho-[N-acetyl-alpha-D-glucosaminyl-(1-&gt;4)]-N-acetyl-alpha-D-muramoyl-L-alanyl-D-glutamyl-meso-2,6-diaminopimeloyl-D-alanyl-D-alanine + UDP + H(+). The protein operates within cell wall biogenesis; peptidoglycan biosynthesis. Its function is as follows. Cell wall formation. Catalyzes the transfer of a GlcNAc subunit on undecaprenyl-pyrophosphoryl-MurNAc-pentapeptide (lipid intermediate I) to form undecaprenyl-pyrophosphoryl-MurNAc-(pentapeptide)GlcNAc (lipid intermediate II). This Finegoldia magna (strain ATCC 29328 / DSM 20472 / WAL 2508) (Peptostreptococcus magnus) protein is UDP-N-acetylglucosamine--N-acetylmuramyl-(pentapeptide) pyrophosphoryl-undecaprenol N-acetylglucosamine transferase.